Reading from the N-terminus, the 167-residue chain is NAD(P)H-quinone oxidoreductase subunit I, chloroplastic (167 aa).

2 4Fe-4S ferredoxin-type domains span residues 55–84 (GRIH…VDWK) and 95–124 (LNYS…MTEE). Cys-64, Cys-67, Cys-70, Cys-74, Cys-104, Cys-107, Cys-110, and Cys-114 together coordinate [4Fe-4S] cluster.

It belongs to the complex I 23 kDa subunit family. NDH is composed of at least 16 different subunits, 5 of which are encoded in the nucleus. The cofactor is [4Fe-4S] cluster.

The protein localises to the plastid. Its subcellular location is the chloroplast thylakoid membrane. It carries out the reaction a plastoquinone + NADH + (n+1) H(+)(in) = a plastoquinol + NAD(+) + n H(+)(out). It catalyses the reaction a plastoquinone + NADPH + (n+1) H(+)(in) = a plastoquinol + NADP(+) + n H(+)(out). Functionally, NDH shuttles electrons from NAD(P)H:plastoquinone, via FMN and iron-sulfur (Fe-S) centers, to quinones in the photosynthetic chain and possibly in a chloroplast respiratory chain. The immediate electron acceptor for the enzyme in this species is believed to be plastoquinone. Couples the redox reaction to proton translocation, and thus conserves the redox energy in a proton gradient. The sequence is that of NAD(P)H-quinone oxidoreductase subunit I, chloroplastic from Atropa belladonna (Belladonna).